The primary structure comprises 216 residues: Adenylate kinase (216 aa).

10-15 (GAGKGT) is an ATP binding site. The interval 30-59 (STGDMLREAVKADTPLGIEAKKVMDVGGLI) is NMP. AMP is bound by residues Thr-31, Arg-36, 57-59 (GLI), 85-88 (GFPR), and Gln-92. An LID region spans residues 122–159 (GRRAHLTSGRTYHIVYNPPKVEGIDDITGEELIQRTDD). Residues Arg-123 and 132–133 (TY) contribute to the ATP site. 2 residues coordinate AMP: Arg-156 and Arg-167. Gly-202 serves as a coordination point for ATP.

The protein belongs to the adenylate kinase family. In terms of assembly, monomer.

Its subcellular location is the cytoplasm. It carries out the reaction AMP + ATP = 2 ADP. The protein operates within purine metabolism; AMP biosynthesis via salvage pathway; AMP from ADP: step 1/1. Catalyzes the reversible transfer of the terminal phosphate group between ATP and AMP. Plays an important role in cellular energy homeostasis and in adenine nucleotide metabolism. The polypeptide is Adenylate kinase (Ruthia magnifica subsp. Calyptogena magnifica).